The chain runs to 100 residues: Integration host factor subunit alpha (100 aa).

The disordered stretch occupies residues 53–72 (FQLRDKPQRPGRNPKTGEEV).

The protein belongs to the bacterial histone-like protein family. In terms of assembly, heterodimer of an alpha and a beta chain.

In terms of biological role, this protein is one of the two subunits of integration host factor, a specific DNA-binding protein that functions in genetic recombination as well as in transcriptional and translational control. The sequence is that of Integration host factor subunit alpha from Neisseria meningitidis serogroup C (strain 053442).